The following is a 142-amino-acid chain: Large ribosomal subunit protein uL11 (142 aa).

It belongs to the universal ribosomal protein uL11 family. Part of the ribosomal stalk of the 50S ribosomal subunit. Interacts with L10 and the large rRNA to form the base of the stalk. L10 forms an elongated spine to which L12 dimers bind in a sequential fashion forming a multimeric L10(L12)X complex. One or more lysine residues are methylated.

Functionally, forms part of the ribosomal stalk which helps the ribosome interact with GTP-bound translation factors. In Shewanella piezotolerans (strain WP3 / JCM 13877), this protein is Large ribosomal subunit protein uL11.